The following is a 362-amino-acid chain: Chorismate synthase (362 aa).

Residues Arg-48 and Arg-54 each coordinate NADP(+). FMN is bound by residues 131–133 (RSS), 243–244 (NA), Gly-287, 302–306 (KPTSS), and Arg-328.

Belongs to the chorismate synthase family. Homotetramer. FMNH2 is required as a cofactor.

The enzyme catalyses 5-O-(1-carboxyvinyl)-3-phosphoshikimate = chorismate + phosphate. It participates in metabolic intermediate biosynthesis; chorismate biosynthesis; chorismate from D-erythrose 4-phosphate and phosphoenolpyruvate: step 7/7. Functionally, catalyzes the anti-1,4-elimination of the C-3 phosphate and the C-6 proR hydrogen from 5-enolpyruvylshikimate-3-phosphate (EPSP) to yield chorismate, which is the branch point compound that serves as the starting substrate for the three terminal pathways of aromatic amino acid biosynthesis. This reaction introduces a second double bond into the aromatic ring system. The sequence is that of Chorismate synthase from Rhodopseudomonas palustris (strain TIE-1).